Reading from the N-terminus, the 332-residue chain is Tetraacyldisaccharide 4'-kinase (332 aa).

53-60 (SVGGNGKT) is a binding site for ATP.

It belongs to the LpxK family.

It carries out the reaction a lipid A disaccharide + ATP = a lipid IVA + ADP + H(+). Its pathway is glycolipid biosynthesis; lipid IV(A) biosynthesis; lipid IV(A) from (3R)-3-hydroxytetradecanoyl-[acyl-carrier-protein] and UDP-N-acetyl-alpha-D-glucosamine: step 6/6. Its function is as follows. Transfers the gamma-phosphate of ATP to the 4'-position of a tetraacyldisaccharide 1-phosphate intermediate (termed DS-1-P) to form tetraacyldisaccharide 1,4'-bis-phosphate (lipid IVA). This Haemophilus influenzae (strain 86-028NP) protein is Tetraacyldisaccharide 4'-kinase.